A 334-amino-acid polypeptide reads, in one-letter code: Phosphate acyltransferase (334 aa).

It belongs to the PlsX family. Homodimer. Probably interacts with PlsY.

Its subcellular location is the cytoplasm. The enzyme catalyses a fatty acyl-[ACP] + phosphate = an acyl phosphate + holo-[ACP]. It participates in lipid metabolism; phospholipid metabolism. Functionally, catalyzes the reversible formation of acyl-phosphate (acyl-PO(4)) from acyl-[acyl-carrier-protein] (acyl-ACP). This enzyme utilizes acyl-ACP as fatty acyl donor, but not acyl-CoA. The polypeptide is Phosphate acyltransferase (Acholeplasma laidlawii (strain PG-8A)).